A 506-amino-acid chain; its full sequence is Ent-kaurenoic acid oxidase (506 aa).

Residues A11–V31 form a helical membrane-spanning segment. Residue C451 participates in heme binding.

The protein belongs to the cytochrome P450 family. Heme serves as cofactor. Expressed in roots and panicles. Expressed at low levels in vegetative shoot apices, leaf sheaths, leaf blades and stems.

It localises to the endoplasmic reticulum membrane. The enzyme catalyses ent-kaur-16-en-19-oate + 3 reduced [NADPH--hemoprotein reductase] + 3 O2 = gibberellin A12 + 3 oxidized [NADPH--hemoprotein reductase] + 4 H2O + 4 H(+). It catalyses the reaction ent-kaur-16-en-19-oate + reduced [NADPH--hemoprotein reductase] + O2 = ent-7alpha-hydroxykaur-16-en-19-oate + oxidized [NADPH--hemoprotein reductase] + H2O + H(+). It carries out the reaction ent-7alpha-hydroxykaur-16-en-19-oate + reduced [NADPH--hemoprotein reductase] + O2 = gibberellin A12 aldehyde + oxidized [NADPH--hemoprotein reductase] + 2 H2O + H(+). The catalysed reaction is gibberellin A12 aldehyde + reduced [NADPH--hemoprotein reductase] + O2 = gibberellin A12 + oxidized [NADPH--hemoprotein reductase] + H2O + 2 H(+). The protein operates within plant hormone biosynthesis; gibberellin biosynthesis. Functionally, involved in gibberellin (GA) biosynthesis. Catalyzes three successive oxidations of ent-kaurenoic acid giving gibberellin 12 (GA12), a key step in GAs biosynthesis. GAs, which are involved many processes, including stem elongation, play a central role in plant development. Required for pollen germination and elongation. In Oryza sativa subsp. japonica (Rice), this protein is Ent-kaurenoic acid oxidase.